The following is a 339-amino-acid chain: Purple acid phosphatase 4 (339 aa).

Positions methionine 1 to alanine 31 are cleaved as a signal peptide. Fe cation is bound at residue aspartate 53. An N-linked (GlcNAc...) asparagine glycan is attached at asparagine 61. Fe cation-binding residues include aspartate 86 and tyrosine 89. Aspartate 86 is a binding site for Zn(2+). Zn(2+) contacts are provided by asparagine 124 and histidine 218. Histidine 227 acts as the Proton donor in catalysis. Histidine 253 contacts Zn(2+). Histidine 253–histidine 255 is a substrate binding site. Position 255 (histidine 255) interacts with Fe cation. N-linked (GlcNAc...) asparagine glycosylation is present at asparagine 284.

The protein belongs to the metallophosphoesterase superfamily. Purple acid phosphatase family. As to quaternary structure, homodimer. Fe cation is required as a cofactor. Requires Zn(2+) as cofactor. Expressed in roots, stems, leaves, flowers and siliques.

The protein resides in the secreted. It carries out the reaction a phosphate monoester + H2O = an alcohol + phosphate. This is Purple acid phosphatase 4 (PAP4) from Arabidopsis thaliana (Mouse-ear cress).